We begin with the raw amino-acid sequence, 389 residues long: P2X purinoceptor 6 (389 aa).

The Cytoplasmic segment spans residues 1–45 (MQLQPAGTGNMASAAAAALVSWGFLDYKTEKYVLTRNCRVGVSQR). The chain crosses the membrane as a helical span at residues 46–66 (LLQLAVVVYVIGWALLAKKGY). Residues 67–335 (QERDLAPQTS…LVTGQAGKFA (269 aa)) lie on the Extracellular side of the membrane. Cystine bridges form between C129-C179, C140-C163, and C146-C173. 3 N-linked (GlcNAc...) asparagine glycosylation sites follow: N167, N197, and N212. 2 cysteine pairs are disulfide-bonded: C230/C240 and C274/C283. The chain crosses the membrane as a helical span at residues 336–356 (LIPTAITVGTGAAWLGMVTFL). Residues 357 to 389 (CDLLLLYVDREAGFYWRTKYEEARAPKTTTNSS) lie on the Cytoplasmic side of the membrane.

The protein belongs to the P2X receptor family. In terms of assembly, unlike most P2RXs, P2RX6 does not seem to form homotrimers. P2RX6 are likely to form as obligate heteromers with other P2RXs subunits. Forms heterotrimer with P2RX2 with a variable subunit stoichiometry determined by subunit expression levels. Forms heterotrimer with P2RX4; functional differences between homomeric P2RX4 and P2RX4/6 heterotrimer are minor. Forms a P2RX2/P2RX4/P2RX6 heterotrimer. Interacts with SF3A1; resulting in a reduction of the splicing activity. N-glycosylated. N-linked glycosylation can affect trafficking to the membrane and function. In terms of tissue distribution, predominantly expressed in skeletal muscle. Also expressed in lung.

The protein localises to the cell membrane. It is found in the endoplasmic reticulum. It localises to the nucleus. The protein resides in the nucleus inner membrane. It catalyses the reaction Ca(2+)(in) = Ca(2+)(out). Its function is as follows. Acts as a modulatory subunit rather than a functional channel. Unlike other P2XRs members, P2RX6 does not seem to form functional homotrimers. P2RX6 requires the presence of P2RX4 or P2RX2 to form functional heterotrimeric receptors at the plasma membrane. P2RX6 can be translocated to the nucleus, where it interacts with the splicing factor (SF3A1), to reduce the incidence of mRNA splicing. May function as a nuclear regulator of post-transcriptional modifications in neurons. This chain is P2X purinoceptor 6 (P2rx6), found in Mus musculus (Mouse).